A 123-amino-acid chain; its full sequence is Large ribosomal subunit protein bL12 (123 aa).

Belongs to the bacterial ribosomal protein bL12 family. Homodimer. Part of the ribosomal stalk of the 50S ribosomal subunit. Forms a multimeric L10(L12)X complex, where L10 forms an elongated spine to which 2 to 4 L12 dimers bind in a sequential fashion. Binds GTP-bound translation factors.

Its function is as follows. Forms part of the ribosomal stalk which helps the ribosome interact with GTP-bound translation factors. Is thus essential for accurate translation. The protein is Large ribosomal subunit protein bL12 of Pseudoalteromonas atlantica (strain T6c / ATCC BAA-1087).